The sequence spans 733 residues: Ferric aerobactin receptor (733 aa).

A signal peptide spans methionine 1 to alanine 25. A TonB box motif is present at residues glutamate 31–asparagine 38. One can recognise a TBDR plug domain in the interval threonine 43 to lysine 153. In terms of domain architecture, TBDR beta-barrel spans glutamate 158–phenylalanine 733. Residues tyrosine 716–phenylalanine 733 carry the TonB C-terminal box motif.

It belongs to the TonB-dependent receptor family.

It localises to the cell outer membrane. Functionally, receptor for aerobactin. This Klebsiella pneumoniae protein is Ferric aerobactin receptor (iutA).